Here is a 662-residue protein sequence, read N- to C-terminus: UPF0313 protein CPR_1216 (662 aa).

The Radical SAM core domain maps to 296-567 (AIEEVKFSLV…AMQRALLQFK (272 aa)). Cysteine 310, cysteine 314, and cysteine 317 together coordinate [4Fe-4S] cluster. Residues 597–662 (RDKNSFGKGN…QRVSKGKKRR (66 aa)) form a disordered region. Residues 618 to 632 (SRNENSGRRESEDKK) show a composition bias toward basic and acidic residues. Positions 633 to 644 (RSSHSKKQRGNK) are enriched in basic residues.

This sequence belongs to the UPF0313 family. [4Fe-4S] cluster serves as cofactor.

The protein is UPF0313 protein CPR_1216 of Clostridium perfringens (strain SM101 / Type A).